We begin with the raw amino-acid sequence, 318 residues long: UDP-N-acetylenolpyruvoylglucosamine reductase (318 aa).

The FAD-binding PCMH-type domain maps to 38–204 (IGGVCPVIVE…LGIEILLKEG (167 aa)). Residue Arg-182 is part of the active site. Over residues 212 to 229 (SLKDKRDRRNSSQPENKK) the composition is skewed to basic and acidic residues. Positions 212-232 (SLKDKRDRRNSSQPENKKSAG) are disordered. Ser-233 acts as the Proton donor in catalysis. Residue Glu-310 is part of the active site.

The protein belongs to the MurB family. FAD serves as cofactor.

The protein resides in the cytoplasm. The enzyme catalyses UDP-N-acetyl-alpha-D-muramate + NADP(+) = UDP-N-acetyl-3-O-(1-carboxyvinyl)-alpha-D-glucosamine + NADPH + H(+). It functions in the pathway cell wall biogenesis; peptidoglycan biosynthesis. Its function is as follows. Cell wall formation. The sequence is that of UDP-N-acetylenolpyruvoylglucosamine reductase from Leptospira interrogans serogroup Icterohaemorrhagiae serovar Lai (strain 56601).